Reading from the N-terminus, the 436-residue chain is 3-phosphoshikimate 1-carboxyvinyltransferase (436 aa).

Residues Lys23, Ser24, and Arg28 each contribute to the 3-phosphoshikimate site. Lys23 provides a ligand contact to phosphoenolpyruvate. Phosphoenolpyruvate contacts are provided by Gly97 and Arg126. Residues Ser171, Gln173, Asp323, and Lys350 each coordinate 3-phosphoshikimate. Gln173 is a binding site for phosphoenolpyruvate. Asp323 acts as the Proton acceptor in catalysis. Phosphoenolpyruvate is bound by residues Arg354 and Arg396.

Belongs to the EPSP synthase family. As to quaternary structure, monomer.

It is found in the cytoplasm. The enzyme catalyses 3-phosphoshikimate + phosphoenolpyruvate = 5-O-(1-carboxyvinyl)-3-phosphoshikimate + phosphate. Its pathway is metabolic intermediate biosynthesis; chorismate biosynthesis; chorismate from D-erythrose 4-phosphate and phosphoenolpyruvate: step 6/7. Its function is as follows. Catalyzes the transfer of the enolpyruvyl moiety of phosphoenolpyruvate (PEP) to the 5-hydroxyl of shikimate-3-phosphate (S3P) to produce enolpyruvyl shikimate-3-phosphate and inorganic phosphate. The polypeptide is 3-phosphoshikimate 1-carboxyvinyltransferase (Prochlorococcus marinus (strain MIT 9301)).